A 594-amino-acid chain; its full sequence is MNETITNKLALLPDKPGCYLMKDRQGTIIYVGKAKVLKNRVRSYFTGSHDSKTQRLVGEICDFEYIVTSSNIEALILELTLIKKHDPKYNVLLKDDKTYPYIKITNERHPRLLITRKVKKDGAKYFGPYPNAGAATETKKLLDRLYPLRKCRKMPDSVCLYYHIGQCLAPCVYEVSEETNQTMVNEITKFLKNGHSDIKEQLRERMEKAAEDLDFERAKELRDTIAQMEKVMEKQKMAFADKTDRDVFGFSYDKGWMCVQVFFIRQGRLIERDVSIFPFYQEASEELLTFIARFYLEKNHIKPKEIFVAESVDKQLLKELLETRVTQPKRGQKKALLDLAEENAALALKEKFSLIERDEQRTVKAVERLGEAIGINAPYRIEAFDNSNIQGVDPVSAMVVFVNGVPQRKEYRKYKIKTVEGPDDYGSMREVVRRRYVRLLKEKRPLPDLIVIDGGAGQIAAAKEVIEDELGQAIPVCGLAKDDKHRTSQLLMGSPPVVVPLQRDSHEFYLLQRIQDEVHRFAITFHRQTRAKSFLQSALDDIPGVGEKRRKALLKTFGSVKKIKEASIEDLSKHVPTKLAETIHHTLNKNKPNA.

A GIY-YIG domain is found at 14–91; it reads DKPGCYLMKD…IKKHDPKYNV (78 aa). One can recognise a UVR domain in the interval 196–231; that stretch reads SDIKEQLRERMEKAAEDLDFERAKELRDTIAQMEKV.

It belongs to the UvrC family. As to quaternary structure, interacts with UvrB in an incision complex.

The protein localises to the cytoplasm. The UvrABC repair system catalyzes the recognition and processing of DNA lesions. UvrC both incises the 5' and 3' sides of the lesion. The N-terminal half is responsible for the 3' incision and the C-terminal half is responsible for the 5' incision. The protein is UvrABC system protein C of Shouchella clausii (strain KSM-K16) (Alkalihalobacillus clausii).